A 500-amino-acid polypeptide reads, in one-letter code: Putative (R)-citramalate synthase CimA (500 aa).

The Pyruvate carboxyltransferase domain occupies 9–258; the sequence is LRFFDTTLRD…DTRIRTERLY (250 aa).

It belongs to the alpha-IPM synthase/homocitrate synthase family. In terms of assembly, homodimer.

The enzyme catalyses pyruvate + acetyl-CoA + H2O = (3R)-citramalate + CoA + H(+). It participates in amino-acid biosynthesis; L-isoleucine biosynthesis; 2-oxobutanoate from pyruvate: step 1/3. Functionally, catalyzes the condensation of pyruvate and acetyl-coenzyme A to form (R)-citramalate. In Methanosphaerula palustris (strain ATCC BAA-1556 / DSM 19958 / E1-9c), this protein is Putative (R)-citramalate synthase CimA.